The chain runs to 629 residues: DNA-directed RNA polymerase subunit beta' (629 aa).

4 residues coordinate Zn(2+): Cys70, Cys72, Cys85, and Cys88. Mg(2+)-binding residues include Asp472, Asp474, and Asp476.

This sequence belongs to the RNA polymerase beta' chain family. RpoC1 subfamily. In plastids the minimal PEP RNA polymerase catalytic core is composed of four subunits: alpha, beta, beta', and beta''. When a (nuclear-encoded) sigma factor is associated with the core the holoenzyme is formed, which can initiate transcription. The cofactor is Mg(2+). Zn(2+) serves as cofactor.

It is found in the plastid. Its subcellular location is the chloroplast. It carries out the reaction RNA(n) + a ribonucleoside 5'-triphosphate = RNA(n+1) + diphosphate. DNA-dependent RNA polymerase catalyzes the transcription of DNA into RNA using the four ribonucleoside triphosphates as substrates. The protein is DNA-directed RNA polymerase subunit beta' of Pyropia yezoensis (Susabi-nori).